We begin with the raw amino-acid sequence, 166 residues long: Endoribonuclease YbeY (166 aa).

Positions 132, 136, and 142 each coordinate Zn(2+).

The protein belongs to the endoribonuclease YbeY family. Zn(2+) serves as cofactor.

It is found in the cytoplasm. Its function is as follows. Single strand-specific metallo-endoribonuclease involved in late-stage 70S ribosome quality control and in maturation of the 3' terminus of the 16S rRNA. In Clostridium botulinum (strain Kyoto / Type A2), this protein is Endoribonuclease YbeY.